Consider the following 460-residue polypeptide: Putative arginine/ornithine antiporter (460 aa).

At M1 to K4 the chain is on the cytoplasmic side. A helical transmembrane segment spans residues L5–S25. Topologically, residues L26–A38 are periplasmic. Residues L39–I59 traverse the membrane as a helical segment. The Cytoplasmic segment spans residues L60 to W92. Residues L93–F113 form a helical membrane-spanning segment. Over T114–G125 the chain is Periplasmic. A helical membrane pass occupies residues N126–L146. Topologically, residues R147 to L157 are cytoplasmic. Residues V158–F178 form a helical membrane-spanning segment. The Periplasmic portion of the chain corresponds to K179–K201. A helical membrane pass occupies residues N202–A222. Topologically, residues R223 to L235 are cytoplasmic. A helical transmembrane segment spans residues L236–V256. At A257–E282 the chain is on the periplasmic side. The helical transmembrane segment at I283–M303 threads the bilayer. The Cytoplasmic portion of the chain corresponds to A304–S331. Residues A332–G352 form a helical membrane-spanning segment. The Periplasmic segment spans residues S353 to T357. A helical membrane pass occupies residues L358–L378. Residues K379 to P384 lie on the Cytoplasmic side of the membrane. 2 consecutive transmembrane segments (helical) span residues L385–G405 and P406–A426. At R427–Q439 the chain is on the cytoplasmic side. The chain crosses the membrane as a helical span at residues E440–G460.

It belongs to the amino acid-polyamine-organocation (APC) superfamily. Basic amino acid/polyamine antiporter (APA) (TC 2.A.3.2) family.

Its subcellular location is the cell inner membrane. The enzyme catalyses L-ornithine(in) + L-arginine(out) = L-ornithine(out) + L-arginine(in). Its function is as follows. Catalyzes electroneutral exchange between arginine and ornithine to allow high-efficiency energy conversion in the arginine deiminase pathway. This is Putative arginine/ornithine antiporter (ydgI) from Escherichia coli O6:H1 (strain CFT073 / ATCC 700928 / UPEC).